The sequence spans 299 residues: Glycine--tRNA ligase alpha subunit (299 aa).

This sequence belongs to the class-II aminoacyl-tRNA synthetase family. In terms of assembly, tetramer of two alpha and two beta subunits.

The protein resides in the cytoplasm. The catalysed reaction is tRNA(Gly) + glycine + ATP = glycyl-tRNA(Gly) + AMP + diphosphate. This Dictyoglomus turgidum (strain DSM 6724 / Z-1310) protein is Glycine--tRNA ligase alpha subunit.